A 990-amino-acid chain; its full sequence is Chondroitin sulfate ABC exolyase (990 aa).

Catalysis depends on His453, which acts as the Proton acceptor. Tyr460 serves as the catalytic Proton donor.

This sequence belongs to the polysaccharide lyase 8 family.

It carries out the reaction Exolytic removal of Delta(4)-unsaturated disaccharide residues from the non-reducing ends of both polymeric chondroitin/dermatan sulfates and their oligosaccharide fragments.. Its activity is regulated as follows. Inhibited by Zn(2+), whereas Ni(2+), Fe(2+), and Cu(2+) have little or no effect on activity. Broad-specificity glycosaminoglycan lyase, which acts in an exolytic fashion, and preferentially degrades the tetra- and hexasaccharide derivatives of chondroitin sulfate and dermatan sulfate produced by the chondroitin sulfate ABC endolyase, to yield the respective disaccharides. To a lesser extent, is also able to split off disaccharide residues directly from polymeric chondroitin 4- and 6-sulfate, dermatan sulfate, chondroitin, and hyaluronan. Is not active against keratan sulfate, heparan sulfate, and heparin. This chain is Chondroitin sulfate ABC exolyase (ChABCII), found in Proteus vulgaris.